The chain runs to 489 residues: Aklavinone 12-hydroxylase DnrF (489 aa).

Residues 17–18, Glu-37, Gln-121, and Leu-145 each bind FAD; that span reads LG. Tyr-224 functions as the Proton acceptor in the catalytic mechanism. Residue Asp-308 participates in FAD binding. Gly-317 is an aklavinone binding site. The disordered stretch occupies residues 402–428; it reads VAAEDDDPEPTEDPRRPSGRPGFRAPH.

This sequence belongs to the PheA/TfdB FAD monooxygenase family. In terms of assembly, monomer. Requires FAD as cofactor.

It carries out the reaction aklavinone + NADPH + O2 + H(+) = epsilon-rhodomycinone + NADP(+) + H2O. The protein operates within antibiotic biosynthesis; daunorubicin biosynthesis. It functions in the pathway antibiotic biosynthesis; carminomycin biosynthesis. It participates in antibiotic biosynthesis; rhodomycin biosynthesis. Its pathway is antibiotic biosynthesis; doxorubicin biosynthesis. Functionally, involved in the biosynthesis of the anthracyclines carminomycin, rhodomycin, daunorubicin (daunomycin) and doxorubicin (adriamycin) which are aromatic polyketide antibiotics that exhibit high cytotoxicity and are widely applied in the chemotherapy of a variety of cancers. Catalyzes the incorporation of a hydroxyl group at position C-11 of aklavinone, resulting in epsilon-rhodomycinone. The chain is Aklavinone 12-hydroxylase DnrF (dnrF) from Streptomyces peucetius subsp. caesius.